The chain runs to 267 residues: Levodione reductase (267 aa).

17-42 (LITGGGSGLGRATAVRLAAEGAKLSL) serves as a coordination point for NAD(+). S152 is a substrate binding site. Y165 acts as the Proton acceptor in catalysis.

This sequence belongs to the short-chain dehydrogenases/reductases (SDR) family.

It carries out the reaction (4R)-hydroxy-(6R)-2,2,6-trimethylcyclohexanone + NAD(+) = (6R)-2,2,6-trimethyl-1,4-cyclohexanedione + NADH + H(+). Strongly activated by monovalent cations, such as K(+), Na(+), and NH4(+). Catalyzes the regio- and stereoselective reversible NAD-dependent reduction of (6R)-2,2,6-trimethyl-1,4-cyclohexanedione (levodione) to (4R,6R)-4-hydroxy-2,2,6-trimethylcyclohexanone (actinol). This Leifsonia aquatica (Corynebacterium aquaticum) protein is Levodione reductase (lvr).